The sequence spans 24 residues: Protein YsdE (24 aa).

The chain is Protein YsdE from Escherichia coli (strain K12).